Consider the following 649-residue polypeptide: Putative calpain-like cysteine protease A (649 aa).

A propeptide spanning residues 1 to 3 (MLT) is cleaved from the precursor. Disordered stretches follow at residues 1–22 (MLTTESPTTTTTTTTTTTSSPS) and 124–193 (PLSN…SMPA). Positions 15 to 123 (TTTTSSPSSD…LHANGEAKWY (109 aa)) constitute a C2 domain. The span at 140 to 149 (ITNSNNKDNN) shows a compositional bias: low complexity. Residues 159-172 (AQEKGDEDQHHSAD) are compositionally biased toward basic and acidic residues. Domain III stretches follow at residues 458–489 (EGTYIVIPSTYDHGIEGAFHLTLFTDDKNATF) and 498–633 (EVEQ…ISLD).

The protein belongs to the peptidase C2 family. Monomer. Post-translationally, undergoes autolytic cleavage between Pro-192 and Ala-193.

It localises to the cytoplasm. The protein resides in the cytosol. Its function is as follows. Has a weak caseinolytic activity. In Dictyostelium discoideum (Social amoeba), this protein is Putative calpain-like cysteine protease A (cplA).